The chain runs to 348 residues: Probable dual-specificity RNA methyltransferase RlmN (348 aa).

The Proton acceptor role is filled by E93. One can recognise a Radical SAM core domain in the interval 99-333; that stretch reads TEKRLTACLS…VSLRKSRGLD (235 aa). C106 and C338 are joined by a disulfide. C113, C117, and C120 together coordinate [4Fe-4S] cluster. Residues 160–161, S190, 219–221, and N295 contribute to the S-adenosyl-L-methionine site; these read GE and SLH. C338 serves as the catalytic S-methylcysteine intermediate.

Belongs to the radical SAM superfamily. RlmN family. The cofactor is [4Fe-4S] cluster.

The protein resides in the cytoplasm. It catalyses the reaction adenosine(2503) in 23S rRNA + 2 reduced [2Fe-2S]-[ferredoxin] + 2 S-adenosyl-L-methionine = 2-methyladenosine(2503) in 23S rRNA + 5'-deoxyadenosine + L-methionine + 2 oxidized [2Fe-2S]-[ferredoxin] + S-adenosyl-L-homocysteine. The catalysed reaction is adenosine(37) in tRNA + 2 reduced [2Fe-2S]-[ferredoxin] + 2 S-adenosyl-L-methionine = 2-methyladenosine(37) in tRNA + 5'-deoxyadenosine + L-methionine + 2 oxidized [2Fe-2S]-[ferredoxin] + S-adenosyl-L-homocysteine. Specifically methylates position 2 of adenine 2503 in 23S rRNA and position 2 of adenine 37 in tRNAs. This is Probable dual-specificity RNA methyltransferase RlmN from Prochlorococcus marinus (strain MIT 9215).